A 120-amino-acid chain; its full sequence is MAKDLEALARRKAKVRRAIRVAANGRPRLSVHRTSQHIYAQVIDDANGETLAAASSLEKDLRTSLKTGADTDAAKTIGKLVAERALAKGVTAVVFDRGAYIFHGRVKALAEGAREGGLQF.

It belongs to the universal ribosomal protein uL18 family. In terms of assembly, part of the 50S ribosomal subunit; part of the 5S rRNA/L5/L18/L25 subcomplex. Contacts the 5S and 23S rRNAs.

Functionally, this is one of the proteins that bind and probably mediate the attachment of the 5S RNA into the large ribosomal subunit, where it forms part of the central protuberance. This chain is Large ribosomal subunit protein uL18, found in Xanthobacter autotrophicus (strain ATCC BAA-1158 / Py2).